The chain runs to 326 residues: Isopenicillin N synthase (326 aa).

Isopenicillin N contacts are provided by R84, Y88, and Y186. N-[(5S)-5-amino-5-carboxypentanoyl]-L-cysteinyl-D-valine contacts are provided by R84, Y88, Y186, H209, and D211. A Fe2OG dioxygenase domain is found at 183–283 (LIRYPFLENY…RLSIPFFANL (101 aa)). The Fe(2+) site is built by H209, D211, and H265. Position 274 (R274) interacts with 2-oxoglutarate. S276 serves as a coordination point for isopenicillin N. An N-[(5S)-5-amino-5-carboxypentanoyl]-L-cysteinyl-D-valine-binding site is contributed by S276.

Belongs to the iron/ascorbate-dependent oxidoreductase family. Requires Fe cation as cofactor. The cofactor is L-ascorbate.

It catalyses the reaction N-[(5S)-5-amino-5-carboxypentanoyl]-L-cysteinyl-D-valine + O2 = isopenicillin N + 2 H2O. Its pathway is antibiotic biosynthesis; penicillin G biosynthesis; penicillin G from L-alpha-aminoadipate and L-cysteine and L-valine: step 2/3. Its function is as follows. Removes, in the presence of oxygen, 4 hydrogen atoms from delta-L-(alpha-aminoadipyl)-L-cysteinyl-D-valine (ACV) to form the azetidinone and thiazolidine rings of isopenicillin. This Flavobacterium sp. (strain SC 12,154) protein is Isopenicillin N synthase (pcbC).